Consider the following 477-residue polypeptide: Octopamine receptor (477 aa).

At 1–55 (MGQAATHVDANYTLINYTEEVIEDDRDACAVADDPKYPSSFGITLAVPEWEAICT) the chain is on the extracellular side. Asn-11 and Asn-16 each carry an N-linked (GlcNAc...) asparagine glycan. The chain crosses the membrane as a helical span at residues 56 to 78 (AIVLTLIIISTIVGNILVILSVF). At 79–88 (TYKPLRIVQN) the chain is on the cytoplasmic side. Residues 89–110 (FFIVSLAVADLTVAILVLPLNV) form a helical membrane-spanning segment. The Extracellular portion of the chain corresponds to 111–127 (AYSILGQWVFGIYVCKM). The helical transmembrane segment at 128–148 (WLTCDIMCCTSSILNLCAIAL) threads the bilayer. Topologically, residues 149-168 (DRYWAITDPINYAQKRTLER) are cytoplasmic. The chain crosses the membrane as a helical span at residues 169–191 (VLLMIGVVWVLSLIISSPPLLGW). Topologically, residues 192 to 216 (NDWPDVFEPDTPCRLTSQPGFVIFS) are extracellular. Residues 217–238 (SSGSFYIPLVIMTVVYFEIYLA) traverse the membrane as a helical segment. At 239–405 (TKKRLRDRAK…LTRERRAART (167 aa)) the chain is on the cytoplasmic side. 2 disordered regions span residues 256-317 (SSGQ…SKDD) and 334-358 (VTDMGENLENRNTSSESNSKETHED). 2 stretches are compositionally biased toward basic and acidic residues: residues 263–272 (NNKDDHHDQD) and 279–295 (NHNEHQGVTRLVSDNEK). Residues 296–312 (KKRTRKLTPKKKPKRKY) are compositionally biased toward basic residues. The chain crosses the membrane as a helical span at residues 406 to 427 (LGIIMGVFVVCWLPFFVIYLVI). At 428–439 (PFCASCCLSNKF) the chain is on the extracellular side. A helical transmembrane segment spans residues 440–460 (INFITWLGYCNSALNPLIYTI). The Cytoplasmic segment spans residues 461-477 (FNMDFRRAFKKLLCMKP).

This sequence belongs to the G-protein coupled receptor 1 family.

The protein resides in the cell membrane. In terms of biological role, receptor for octopamine. Octopamine (OA) is a neurotransmitter, neurohormone, and neuromodulator in invertebrates. The activity of this receptor is mediated by G proteins which activate adenylyl cyclase. This Heliothis virescens (Tobacco budworm moth) protein is Octopamine receptor.